Consider the following 444-residue polypeptide: Elongation factor 1-alpha (444 aa).

The tr-type G domain maps to 15–238 (KPHINLAVVG…DSFQPPQRPV (224 aa)). The G1 stretch occupies residues 24 to 31 (GHVDNGKS). 24–31 (GHVDNGKS) contacts GTP. S31 lines the Mg(2+) pocket. The interval 80–84 (GVTIE) is G2. The tract at residues 101–104 (DLPG) is G3. GTP is bound by residues 101 to 105 (DLPGH) and 163 to 166 (NKMD). The interval 163 to 166 (NKMD) is G4. The segment at 202 to 204 (SAI) is G5.

The protein belongs to the TRAFAC class translation factor GTPase superfamily. Classic translation factor GTPase family. EF-Tu/EF-1A subfamily.

It localises to the cytoplasm. It catalyses the reaction GTP + H2O = GDP + phosphate + H(+). GTP hydrolase that promotes the GTP-dependent binding of aminoacyl-tRNA to the A-site of ribosomes during protein biosynthesis. The sequence is that of Elongation factor 1-alpha from Pyrobaculum aerophilum (strain ATCC 51768 / DSM 7523 / JCM 9630 / CIP 104966 / NBRC 100827 / IM2).